Here is a 119-residue protein sequence, read N- to C-terminus: Large ribosomal subunit protein bL17 (119 aa).

Belongs to the bacterial ribosomal protein bL17 family. Part of the 50S ribosomal subunit. Contacts protein L32.

In Mycoplasma mycoides subsp. mycoides SC (strain CCUG 32753 / NCTC 10114 / PG1), this protein is Large ribosomal subunit protein bL17.